A 336-amino-acid polypeptide reads, in one-letter code: Mitochondrial thiamine diphosphate carrier 2 (336 aa).

Helical transmembrane passes span 11-27, 88-105, 127-150, 182-199, 230-246, and 303-322; these read RRAL…GGIS, VPAL…FTVL, YLSY…FDLL, LYSG…YAGL, SVSS…AGTF, and GLFP…FVAY. 3 Solcar repeats span residues 11 to 111, 124 to 210, and 231 to 328; these read RRAL…LKTF, LSPY…FKRS, and VSSF…ISDW.

It belongs to the mitochondrial carrier (TC 2.A.29) family. Ubiquitous.

Its subcellular location is the mitochondrion inner membrane. Functionally, mitochondrial transporter that mediates uptake of thiamine diphosphate (ThDP) into mitochondria. The protein is Mitochondrial thiamine diphosphate carrier 2 of Zea mays (Maize).